The sequence spans 354 residues: Petrobactin import system permease protein FatC (354 aa).

The next 9 helical transmembrane spans lie at 37–57 (YWIV…GLLV), 77–97 (IVAI…TVAF), 116–136 (LYSA…LINF), 141–161 (SFLF…GWLL), 168–188 (LQLM…VSTF), 214–234 (PAYF…IFAH), 259–279 (VIYT…LIGP), 302–322 (YIFP…YFLM), and 329–349 (QGVV…TIVL).

Belongs to the binding-protein-dependent transport system permease family. FecCD subfamily. In terms of assembly, the complex is composed of two ATP-binding proteins (FatE), two transmembrane proteins (FatC and FatD) and a solute-binding protein (FpuA).

It is found in the cell membrane. Its function is as follows. Part of an ABC transporter complex involved in ferric-petrobactin uptake. Probably responsible for the translocation of the substrate across the membrane. This is Petrobactin import system permease protein FatC from Bacillus anthracis.